The chain runs to 704 residues: DNA ligase (704 aa).

Residues 43-47 (DADYD), 92-93 (SL), and Glu-124 contribute to the NAD(+) site. Residue Lys-126 is the N6-AMP-lysine intermediate of the active site. Positions 147, 182, 298, and 322 each coordinate NAD(+). Residues Cys-427, Cys-430, Cys-445, and Cys-451 each contribute to the Zn(2+) site. In terms of domain architecture, BRCT spans 625 to 704 (PVASPVAGKI…DGWLRLIGDA (80 aa)).

This sequence belongs to the NAD-dependent DNA ligase family. LigA subfamily. It depends on Mg(2+) as a cofactor. Mn(2+) serves as cofactor.

It catalyses the reaction NAD(+) + (deoxyribonucleotide)n-3'-hydroxyl + 5'-phospho-(deoxyribonucleotide)m = (deoxyribonucleotide)n+m + AMP + beta-nicotinamide D-nucleotide.. In terms of biological role, DNA ligase that catalyzes the formation of phosphodiester linkages between 5'-phosphoryl and 3'-hydroxyl groups in double-stranded DNA using NAD as a coenzyme and as the energy source for the reaction. It is essential for DNA replication and repair of damaged DNA. This chain is DNA ligase, found in Cereibacter sphaeroides (strain ATCC 17023 / DSM 158 / JCM 6121 / CCUG 31486 / LMG 2827 / NBRC 12203 / NCIMB 8253 / ATH 2.4.1.) (Rhodobacter sphaeroides).